Reading from the N-terminus, the 226-residue chain is LIM domain-containing protein PLIM2a (226 aa).

2 consecutive LIM zinc-binding domains span residues 8 to 68 (DKCK…LFKE) and 104 to 164 (DKCA…LFLE). The segment at 173 to 226 (QAAANHRRSASSGGASPPSDDHKPDDTASIPEAKEDDAAPEAAGEEEPEPVVES) is disordered. Residues 191-209 (SDDHKPDDTASIPEAKEDD) show a composition bias toward basic and acidic residues. Acidic residues predominate over residues 210-226 (AAPEAAGEEEPEPVVES).

In terms of assembly, interacts with F-actin. As to expression, predominantly expressed in flowers, in the tapetum and in pollen grains. Detected in leaves and stems.

It localises to the cytoplasm. The protein localises to the cytoskeleton. Binds to actin filaments and promotes cross-linking into thick bundles. Has an actin-stabilizing activity. The actin regulatory activities are inhibited by pH &gt; 6.8 but are [Ca(2+)] independent. This Arabidopsis thaliana (Mouse-ear cress) protein is LIM domain-containing protein PLIM2a.